Here is a 778-residue protein sequence, read N- to C-terminus: Preaspterpenacid I synthase sttA (778 aa).

A sesterterpenoid synthase region spans residues 4-359 (ISDVMKHCVP…RYHRTDLATT (356 aa)). Mg(2+) is bound at residue Asp-105. Residue Asp-105 coordinates substrate. Positions 211–214 (RVNE) are substrate. Asn-255 serves as a coordination point for substrate. 2 substrate regions span residues 259 to 263 (SFPKE) and 350 to 351 (RY). The tract at residues 360 to 774 (AEDRATLIGK…RMMLLGMGPK (415 aa)) is geranylfarneyl diphosphate synthase. The disordered stretch occupies residues 423–445 (AFKKSNPRNGKQNGTEGSKGTFT). Residues 429-445 (PRNGKQNGTEGSKGTFT) show a composition bias toward polar residues. Residues Lys-493, Arg-496, and His-525 each contribute to the isopentenyl diphosphate site. Asp-532 and Asp-536 together coordinate Mg(2+). Position 541 (Arg-541) interacts with dimethylallyl diphosphate. Residue Arg-542 coordinates isopentenyl diphosphate. Dimethylallyl diphosphate is bound by residues Lys-619, Thr-620, Gln-657, Asn-664, and Lys-674.

In the N-terminal section; belongs to the terpene synthase family. This sequence in the C-terminal section; belongs to the FPP/GGPP synthase family.

It carries out the reaction 4 isopentenyl diphosphate + dimethylallyl diphosphate = (2E,6E,10E,14E)-geranylfarnesyl diphosphate + 4 diphosphate. The catalysed reaction is (2E,6E,10E,14E)-geranylfarnesyl diphosphate + H2O = preaspterpenacid acid I + diphosphate. The protein operates within secondary metabolite biosynthesis; terpenoid biosynthesis. In terms of biological role, sesterterpenoid synthase; part of the gene cluster that mediates the biosynthesis of aspterpenacids. Performs both prenyl transferase and terpene cyclase activity, converting isopentenyl diphosphate and dimethylallyl diphosphate into geranylfarnesyl diphosphate (GFPP) and then converting GFPP into preaspterpenacid I. C22-oxidative modification of preaspterpenacid I by the cytochrome P450 monooxygenase sttB then leads to preaspterpenacid II. It has still to be determined how preaspterpenacid II is further modified to produce aspterpenacids. This is Preaspterpenacid I synthase sttA from Aspergillus terreus.